Here is a 502-residue protein sequence, read N- to C-terminus: Peroxisomal catalase (502 aa).

Catalysis depends on residues His64 and Asn137. A heme-binding site is contributed by Tyr347. The short motif at 500-502 (AKM) is the Microbody targeting signal element.

It belongs to the catalase family. It depends on heme as a cofactor.

Its subcellular location is the peroxisome matrix. The catalysed reaction is 2 H2O2 = O2 + 2 H2O. Its function is as follows. Catalyzes the degradation of hydrogen peroxide (H(2)O(2)) generated by peroxisomal oxidases to water and oxygen, thereby protecting cells from the toxic effects of hydrogen peroxide. In Toxoplasma gondii, this protein is Peroxisomal catalase.